A 714-amino-acid chain; its full sequence is Polyribonucleotide nucleotidyltransferase (714 aa).

Mg(2+) contacts are provided by aspartate 488 and aspartate 494. The KH domain occupies 555 to 614 (PRIEVMNIPTDKIRDVIGSGGKVIREIVEKTGAKINIEDDGTVKIASSNGKEIEAAKKWI). Residues 624–692 (GEIYEGTVVK…ERGKVRLSMK (69 aa)) form the S1 motif domain.

This sequence belongs to the polyribonucleotide nucleotidyltransferase family. The cofactor is Mg(2+).

Its subcellular location is the cytoplasm. It catalyses the reaction RNA(n+1) + phosphate = RNA(n) + a ribonucleoside 5'-diphosphate. Functionally, involved in mRNA degradation. Catalyzes the phosphorolysis of single-stranded polyribonucleotides processively in the 3'- to 5'-direction. The polypeptide is Polyribonucleotide nucleotidyltransferase (Brucella melitensis biotype 2 (strain ATCC 23457)).